Consider the following 425-residue polypeptide: MMPSESGAERRDRAAAQVGTAAATAVATAAPAGGGPDPEALSAFPGRHLSGLSWPQVKRLDALLSEPIPIHGRGNFPTLSVQPRQIVQVVRSTLEEQGLHVHSVRLHGSAASHVLHPESGLGYKDLDLVFRVDLRSEASFQLTKAVVLACLLDFLPAGVSRAKITPLTLKEAYVQKLVKVCTDSDRWSLISLSNKSGKNVELKFVDSVRRQFEFSIDSFQIILDSLLLFGQCSSTPMSEAFHPTVTGESLYGDFTEALEHLRHRVIATRSPEEIRGGGLLKYCHLLVRGFRPRPSTDVRALQRYMCSRFFIDFPDLVEQRRTLERYLEAHFGGADAARRYACLVTLHRVVNESTVCLMNHERRQTLDLIAALALQALAEQGPAATAALAWRPPGTDGVVPATVNYYVTPVQPLLAHAYPTWLPCN.

The tract at residues 1–42 is disordered; the sequence is MMPSESGAERRDRAAAQVGTAAATAVATAAPAGGGPDPEALS. A compositionally biased stretch (low complexity) spans 15 to 31; that stretch reads AAQVGTAAATAVATAAP.

The protein belongs to the TENT family.

The protein localises to the cytoplasm. Its subcellular location is the nucleus. The enzyme catalyses RNA(n) + ATP = RNA(n)-3'-adenine ribonucleotide + diphosphate. Functionally, catalyzes the transfer of one adenosine molecule from an ATP to an mRNA poly(A) tail bearing a 3'-OH terminal group in an ATP hydrolysis-dependent manner. May be involved in maintaining the translation efficiency of at least some genes through preventing degradation of their mRNAs. Prefers RNA molecules that are adenosine-rich close to 3'-end. In addition, may inhibit cell proliferation and cell cycle progression through ubiquitination of beta-catenin/CTNNB1. The sequence is that of Terminal nucleotidyltransferase 5B from Homo sapiens (Human).